The chain runs to 323 residues: MMESNEENREKKTIEDLPGVGEATAEKLRENGYDDIMAIAVASPKDLSDVTGIGEGAAAKIIAAARKFADIGNFETGEEILERRKSIQKLTTGSKNLDDLLGGGLETQAITEFFGEFGSGKTQIMHQLAVNCTLPKEKGGFDSDVMMIDTENTFRPERIIQMAKSKGADPDETLKRIHVARAYNSHHQILLAEKAQDTAKEYNIKLLIVDSLTAHFRSEYVGRGSLAERQQLLNKHMHDLLRFGTIYNAVIAVTNQVSARPDVFFGDPMAPIGGNIVGHTATFRIYLRKSKGGKRIARLIDSPYLPEGETVIQISEEGVSDGT.

Basic and acidic residues predominate over residues 1-15 (MMESNEENREKKTIE). Residues 1–21 (MMESNEENREKKTIEDLPGVG) form a disordered region. 115–122 (GEFGSGKT) is an ATP binding site.

It belongs to the eukaryotic RecA-like protein family.

Involved in DNA repair and in homologous recombination. Binds and assemble on single-stranded DNA to form a nucleoprotein filament. Hydrolyzes ATP in a ssDNA-dependent manner and promotes DNA strand exchange between homologous DNA molecules. The chain is DNA repair and recombination protein RadA (radA) from Thermoplasma acidophilum (strain ATCC 25905 / DSM 1728 / JCM 9062 / NBRC 15155 / AMRC-C165).